Reading from the N-terminus, the 478-residue chain is MAELADAPDLGSGARKGVRVRLPPPAPHKNGGKNESRGSGQGSLFKALTVEIQGDSVKEKIDEMYKQLQKTVQIQGFRKGKAPLWIVRAKYKDYVEEEVGKKIADETLQKALEEANLKPVADVFLEKVEVDEKEGKVKYVVSFEVAPEFELKDVENLEVEVPKIEFKEDYVKEELERLREANAVWEPKDENEPAQEGDMLVVEYEVEEIGGEGEKVKQETSVILGQGMLRPEVEEALKGKKVGEEVELKELPLYDQEGKEVGKVNIKIKIKEIKKKVLPELNDEFAKELGYASLKDLEEKIREDIKQKLEKLKEQVIEERVADKLVEIHDIPVPQTLLRRELSFLVDRRLRELQALGIDTRYVDIKKIVEEVQPIAEANIKLRFILDKYAQEKGIEPTGEDIEAQYKELAEQYGTTVDEIKKYFKENNLEQVVYEDARRKKALKEIISKVKIKEVEQKQEEEKKEEKEEVKNESQGNT.

Residues 1–41 (MAELADAPDLGSGARKGVRVRLPPPAPHKNGGKNESRGSGQ) form a disordered region. The PPIase FKBP-type domain occupies 197–279 (GDMLVVEYEV…IKEIKKKVLP (83 aa)). A compositionally biased stretch (basic and acidic residues) spans 455-472 (VEQKQEEEKKEEKEEVKN). Residues 455–478 (VEQKQEEEKKEEKEEVKNESQGNT) are disordered.

The protein belongs to the FKBP-type PPIase family. Tig subfamily.

It is found in the cytoplasm. It catalyses the reaction [protein]-peptidylproline (omega=180) = [protein]-peptidylproline (omega=0). Involved in protein export. Acts as a chaperone by maintaining the newly synthesized protein in an open conformation. Functions as a peptidyl-prolyl cis-trans isomerase. This is Trigger factor from Aquifex aeolicus (strain VF5).